A 241-amino-acid polypeptide reads, in one-letter code: Synaptogyrin (241 aa).

An MARVEL domain is found at 30–179; the sequence is FAMKPQVVIR…CALMAYKRFL (150 aa). 4 consecutive transmembrane segments (helical) span residues 34–54, 81–101, 115–135, and 155–175; these read PQVVIRALCWLFSVVVFGCIS, MVGVFGFLASMGFMGGEFLFE, ADMGFSALWTFMYFVAFLYLW, and TAIWFCLFSIVSWALCALMAY. The segment at 216 to 241 is disordered; sequence ASPFGQPQQGGMEQQQSGMEYQQPTY. Residues 220-241 are compositionally biased toward low complexity; it reads GQPQQGGMEQQQSGMEYQQPTY.

The protein belongs to the synaptogyrin family.

The protein resides in the cytoplasmic vesicle membrane. It is found in the cytoplasmic vesicle. It localises to the secretory vesicle membrane. The protein localises to the secretory vesicle. Its subcellular location is the synaptic vesicle membrane. Required for the correct formation of synaptic vesicles at nerve terminals and has a role in the regulation of the synaptic vesicle exo-endocytic cycle. This is Synaptogyrin from Drosophila melanogaster (Fruit fly).